Consider the following 261-residue polypeptide: Intermembrane phospholipid transport system permease protein MlaE (261 aa).

Topologically, residues 1–12 (MIVNFISALGKQ) are cytoplasmic. Residues 13 to 33 (VIDFFRALGRAGFMLFGALIG) traverse the membrane as a helical segment. At 34 to 49 (KPQIRKHFPLLVKQMH) the chain is on the periplasmic side. Residues 50-70 (VLGVQSLLIILLSGLFIGMVL) traverse the membrane as a helical segment. At 71 to 147 (GLQGYVVLID…DPLRRVIAPR (77 aa)) the chain is on the cytoplasmic side. A helical transmembrane segment spans residues 148-168 (FWAGVISMPVLSILFIAIGIW). Over 169–198 (GGSLVGVDWKGVDSGSFWSVMQNSVSWSYD) the chain is Periplasmic. Residues 199 to 219 (ILNGFIKAVFFAVAVTWIALF) form a helical membrane-spanning segment. The Cytoplasmic portion of the chain corresponds to 220 to 238 (NGYDCMPTSEGISQATTRT). A helical membrane pass occupies residues 239–259 (VVHASLVVLGLDFILTAIMFG). The Periplasmic segment spans residues 260–261 (AG).

Belongs to the MlaE permease family. The complex is composed of two ATP-binding proteins (MlaF), two transmembrane proteins (MlaE), two cytoplasmic solute-binding proteins (MlaB) and six periplasmic solute-binding proteins (MlaD).

Its subcellular location is the cell inner membrane. Its function is as follows. Part of the ABC transporter complex MlaFEDB, which is involved in a phospholipid transport pathway that maintains lipid asymmetry in the outer membrane by retrograde trafficking of phospholipids from the outer membrane to the inner membrane. Probably responsible for the translocation of the substrate across the membrane. The protein is Intermembrane phospholipid transport system permease protein MlaE of Haemophilus influenzae (strain ATCC 51907 / DSM 11121 / KW20 / Rd).